The following is a 282-amino-acid chain: sn-glycerol-3-phosphate transport system permease protein UgpE (282 aa).

Helical transmembrane passes span 14–34, 86–106, 112–132, 146–168, 201–221, and 248–268; these read LILI…FVAS, MAIA…IVFF, MFFF…RILP, YAGL…QFFL, IAAL…WPLL, and WNYV…VVVL. Positions 78-269 constitute an ABC transmembrane type-1 domain; sequence LWNSFVVAMA…IPLILVVVLM (192 aa).

Belongs to the binding-protein-dependent transport system permease family. As to quaternary structure, the complex is composed of two ATP-binding proteins (UgpC), two transmembrane proteins (UgpA and UgpE) and a solute-binding protein (UgpB).

Its subcellular location is the cell inner membrane. In terms of biological role, part of the ABC transporter complex UgpBAEC involved in sn-glycerol-3-phosphate (G3P) import. Probably responsible for the translocation of the substrate across the membrane. The polypeptide is sn-glycerol-3-phosphate transport system permease protein UgpE (ugpE) (Brucella abortus (strain 2308)).